The primary structure comprises 116 residues: Peptidyl-tRNA hydrolase (116 aa).

The protein belongs to the PTH2 family.

The protein localises to the cytoplasm. It catalyses the reaction an N-acyl-L-alpha-aminoacyl-tRNA + H2O = an N-acyl-L-amino acid + a tRNA + H(+). Functionally, the natural substrate for this enzyme may be peptidyl-tRNAs which drop off the ribosome during protein synthesis. In Methanopyrus kandleri (strain AV19 / DSM 6324 / JCM 9639 / NBRC 100938), this protein is Peptidyl-tRNA hydrolase.